We begin with the raw amino-acid sequence, 1634 residues long: Probable serine/threonine-protein kinase DDB_G0282895 (1634 aa).

Residues Tyr-40–Tyr-63 form an MORN 1 repeat. A disordered region spans residues Gln-84 to Asn-131. Over residues Lys-89–Pro-109 the composition is skewed to low complexity. Positions Ile-110–Gln-119 are enriched in polar residues. Positions Asn-120 to Asn-131 are enriched in low complexity. The MORN 2 repeat unit spans residues Tyr-169 to Ser-191. Low complexity-rich tracts occupy residues Ser-273 to Thr-292 and Ser-318 to Ser-339. Disordered stretches follow at residues Ser-273 to Gln-367, Thr-658 to Val-750, and Ser-783 to Gln-816. Over residues Gly-340–Ser-351 the composition is skewed to polar residues. Low complexity-rich tracts occupy residues Gln-352–Gln-367, Thr-658–Thr-688, and Pro-703–Ser-715. Over residues Asp-716–Ser-732 the composition is skewed to polar residues. A compositionally biased stretch (low complexity) spans Asn-787 to Asn-813. The helical transmembrane segment at Ile-1255–Tyr-1275 threads the bilayer. The 258-residue stretch at Leu-1377–Cys-1634 folds into the Protein kinase domain. ATP is bound by residues Leu-1383–Val-1391 and Lys-1404. Asp-1500 functions as the Proton acceptor in the catalytic mechanism.

This sequence belongs to the protein kinase superfamily. TKL Ser/Thr protein kinase family.

The protein resides in the membrane. It carries out the reaction L-seryl-[protein] + ATP = O-phospho-L-seryl-[protein] + ADP + H(+). The enzyme catalyses L-threonyl-[protein] + ATP = O-phospho-L-threonyl-[protein] + ADP + H(+). The protein is Probable serine/threonine-protein kinase DDB_G0282895 of Dictyostelium discoideum (Social amoeba).